Here is a 105-residue protein sequence, read N- to C-terminus: Type VII secretion system extracellular protein D (105 aa).

In terms of assembly, forms heterodimers with EsxB.

The protein localises to the secreted. The chain is Type VII secretion system extracellular protein D from Staphylococcus aureus (strain USA300).